A 313-amino-acid chain; its full sequence is Methionyl-tRNA formyltransferase (313 aa).

Position 109 to 112 (109 to 112 (SLLP)) interacts with (6S)-5,6,7,8-tetrahydrofolate.

The protein belongs to the Fmt family.

It carries out the reaction L-methionyl-tRNA(fMet) + (6R)-10-formyltetrahydrofolate = N-formyl-L-methionyl-tRNA(fMet) + (6S)-5,6,7,8-tetrahydrofolate + H(+). Its function is as follows. Attaches a formyl group to the free amino group of methionyl-tRNA(fMet). The formyl group appears to play a dual role in the initiator identity of N-formylmethionyl-tRNA by promoting its recognition by IF2 and preventing the misappropriation of this tRNA by the elongation apparatus. This chain is Methionyl-tRNA formyltransferase, found in Thermotoga sp. (strain RQ2).